Reading from the N-terminus, the 981-residue chain is Ubiquitin carboxyl-terminal hydrolase 15 (981 aa).

A2 is subject to N-acetylalanine. Residues 2–223 form a mediates interaction with SART3 region; sequence AEGGAADLDT…KNEDGTWPRG (222 aa). In terms of domain architecture, DUSP spans 7 to 118; that stretch reads ADLDTQRSDI…GQEPIARKVV (112 aa). Residues 216 to 237 are disordered; that stretch reads EDGTWPRGPSTPKSPGASNFST. Residue T226 is modified to Phosphothreonine. The span at 226–237 shows a compositional bias: polar residues; sequence TPKSPGASNFST. Phosphoserine is present on residues S229 and S242. A USP domain is found at 289–933; sequence CGLSNLGNTC…AAYVLFYQRQ (645 aa). The Nucleophile role is filled by C298. T602 carries the post-translational modification Phosphothreonine. The segment at 629–694 is disordered; it reads GSLHCCKDQN…GGDNDSENGL (66 aa). The segment covering 656–673 has biased composition (acidic residues); it reads METDEPDDESSQDQELPS. The active-site Proton acceptor is the H891. Residues 952 to 981 are disordered; that stretch reads SAATGIPLESDEDSNDNDNDIENENCMHTN. A compositionally biased stretch (acidic residues) spans 960-974; it reads ESDEDSNDNDNDIEN. A phosphoserine mark is found at S961 and S965.

Belongs to the peptidase C19 family. As to quaternary structure, a homodimer structure has been reported; however it is unclear whether the protein form a homodimer in vivo. Identified in a complex with the COP9 signalosome complex (CSN). Interacts with SMAD1, SMAD2 and SMAD3; the interaction is direct. Forms a complex with SMURF2 and SMAD7. Interacts with TGFBR1. Interacts with SART3; the interaction is direct. May interact with RNF20 and RNF40. May interact with PRKN. Interacts with INCA1. In terms of assembly, (Microbial infection) Interacts with human papillomavirus type 16 protein E6. In terms of processing, phosphorylated. Phosphorylation protects against ubiquitination and subsequent degradation by the proteasome. Ubiquitinated, leading to degradation by the proteasome. In terms of tissue distribution, expressed in skeletal muscle, kidney, heart, placenta, liver, thymus, lung, and ovary, with little or no expression in other tissues.

It is found in the cytoplasm. Its subcellular location is the nucleus. The protein localises to the mitochondrion. The catalysed reaction is Thiol-dependent hydrolysis of ester, thioester, amide, peptide and isopeptide bonds formed by the C-terminal Gly of ubiquitin (a 76-residue protein attached to proteins as an intracellular targeting signal).. Its function is as follows. Hydrolase that removes conjugated ubiquitin from target proteins and regulates various pathways such as the TGF-beta receptor signaling, NF-kappa-B and RNF41/NRDP1-PRKN pathways. Acts as a key regulator of TGF-beta receptor signaling pathway, but the precise mechanism is still unclear: according to a report, acts by promoting deubiquitination of monoubiquitinated R-SMADs (SMAD1, SMAD2 and/or SMAD3), thereby alleviating inhibition of R-SMADs and promoting activation of TGF-beta target genes. According to another reports, regulates the TGF-beta receptor signaling pathway by mediating deubiquitination and stabilization of TGFBR1, leading to an enhanced TGF-beta signal. Able to mediate deubiquitination of monoubiquitinated substrates, 'Lys-27'-, 'Lys-48'- and 'Lys-63'-linked polyubiquitin chains. May also regulate gene expression and/or DNA repair through the deubiquitination of histone H2B. Acts as an inhibitor of mitophagy by counteracting the action of parkin (PRKN): hydrolyzes cleavage of 'Lys-48'- and 'Lys-63'-linked polyubiquitin chains attached by parkin on target proteins such as MFN2, thereby reducing parkin's ability to drive mitophagy. Acts as an associated component of COP9 signalosome complex (CSN) and regulates different pathways via this association: regulates NF-kappa-B by mediating deubiquitination of NFKBIA and deubiquitinates substrates bound to VCP. Involved in endosome organization by mediating deubiquitination of SQSTM1: ubiquitinated SQSTM1 forms a molecular bridge that restrains cognate vesicles in the perinuclear region and its deubiquitination releases target vesicles for fast transport into the cell periphery. Acts as a negative regulator of antifungal immunity by mediating 'Lys-27'-linked deubiquitination of CARD9, thereby inactivating CARD9. Functionally, (Microbial infection) Protects APC and human papillomavirus type 16 protein E6 against degradation via the ubiquitin proteasome pathway. The sequence is that of Ubiquitin carboxyl-terminal hydrolase 15 from Homo sapiens (Human).